Here is a 478-residue protein sequence, read N- to C-terminus: Early growth response protein 4 (478 aa).

Residues 15-37 (SKPTEGCAHTSPELPRLPARDAP) are disordered. 3 consecutive C2H2-type zinc fingers follow at residues 372-396 (FACPVESCVRTFARSDELNRHLRIH), 402-424 (FQCRICLRNFSRSDHLTTHVRTH), and 430-452 (FACDVCGRRFARSDEKKRHSKVH).

This sequence belongs to the EGR C2H2-type zinc-finger protein family.

It localises to the nucleus. Transcriptional regulator. Recognizes and binds to the DNA sequence 5'-GCGGGGGCG-3' (GSG). Activates the transcription of target genes whose products are required for mitogenesis and differentiation. This chain is Early growth response protein 4 (Egr4), found in Rattus norvegicus (Rat).